A 339-amino-acid polypeptide reads, in one-letter code: MAIKVSIDASGGDYGIPVTIVAGIKALNIFQDLHLYFVGNEPSITTELGKYPSNTLNSRYTIIHASEVVLMNESPAIALRKKKDSSMRIAINLVKTFKADACVSAGNTGALMAISRFVLRTIKGIDRPAIMGRMPTITGHTHMLDLGANVDSKPKALVEFATMGSIAVKHTENIESPTIGLLNIGEEDMKGSEKIRKAATLLKASNLNYVGFVEGNDIYKGIVDLIVCDGFEGNIALKASEGVASMMEHYLKQAFTRNLLTKLVSLIAIPVLKDFKSSLNPDKYNGASLLGLRGIVVKSHGSANIDSFLTAITEAYIEAHAKISDKISLQISKELEHNE.

Belongs to the PlsX family. Homodimer. Probably interacts with PlsY.

The protein resides in the cytoplasm. The enzyme catalyses a fatty acyl-[ACP] + phosphate = an acyl phosphate + holo-[ACP]. The protein operates within lipid metabolism; phospholipid metabolism. Its function is as follows. Catalyzes the reversible formation of acyl-phosphate (acyl-PO(4)) from acyl-[acyl-carrier-protein] (acyl-ACP). This enzyme utilizes acyl-ACP as fatty acyl donor, but not acyl-CoA. In Vesicomyosocius okutanii subsp. Calyptogena okutanii (strain HA), this protein is Phosphate acyltransferase.